Here is a 510-residue protein sequence, read N- to C-terminus: Inositol-3-phosphate synthase isozyme 2 (510 aa).

Belongs to the myo-inositol 1-phosphate synthase family. Requires NAD(+) as cofactor. As to expression, expressed in siliques, leaves, roots, seed endosperm, but not in embryos. Highest expression in seeds. In leaves, only expressed in hydathodes and vascular tissue.

The protein localises to the cytoplasm. It catalyses the reaction D-glucose 6-phosphate = 1D-myo-inositol 3-phosphate. Its pathway is polyol metabolism; myo-inositol biosynthesis; myo-inositol from D-glucose 6-phosphate: step 1/2. In terms of biological role, key enzyme in myo-inositol biosynthesis pathway that catalyzes the conversion of glucose 6-phosphate to 1-myo-inositol 1-phosphate in a NAD-dependent manner. The protein is Inositol-3-phosphate synthase isozyme 2 (IPS2) of Arabidopsis thaliana (Mouse-ear cress).